The primary structure comprises 247 residues: ATP synthase subunit a (247 aa).

The next 6 helical transmembrane spans lie at 24-44 (IAFT…SLLM), 82-102 (FFPF…VGII), 112-132 (IIVT…YGFY), 141-161 (LFVP…IEVI), 194-214 (MLGA…ALVV), and 219-239 (LELL…CIYI).

The protein belongs to the ATPase A chain family. F-type ATPases have 2 components, CF(1) - the catalytic core - and CF(0) - the membrane proton channel. CF(1) has five subunits: alpha(3), beta(3), gamma(1), delta(1), epsilon(1). CF(0) has three main subunits: a(1), b(2) and c(9-12). The alpha and beta chains form an alternating ring which encloses part of the gamma chain. CF(1) is attached to CF(0) by a central stalk formed by the gamma and epsilon chains, while a peripheral stalk is formed by the delta and b chains.

Its subcellular location is the cell inner membrane. In terms of biological role, key component of the proton channel; it plays a direct role in the translocation of protons across the membrane. This chain is ATP synthase subunit a, found in Nitrobacter winogradskyi (strain ATCC 25391 / DSM 10237 / CIP 104748 / NCIMB 11846 / Nb-255).